The chain runs to 211 residues: Large ribosomal subunit protein uL3 (211 aa).

This sequence belongs to the universal ribosomal protein uL3 family. As to quaternary structure, part of the 50S ribosomal subunit. Forms a cluster with proteins L14 and L19.

One of the primary rRNA binding proteins, it binds directly near the 3'-end of the 23S rRNA, where it nucleates assembly of the 50S subunit. This chain is Large ribosomal subunit protein uL3, found in Geobacter sp. (strain M21).